Reading from the N-terminus, the 477-residue chain is Bifunctional protein HldE (477 aa).

The interval 1-318 (MKVNLPAFER…ENAVRGRADT (318 aa)) is ribokinase. Position 195 to 198 (195 to 198 (NLSE)) interacts with ATP. The active site involves D264. Positions 344-477 (MTNGVFDILH…IKKIQTESEK (134 aa)) are cytidylyltransferase.

This sequence in the N-terminal section; belongs to the carbohydrate kinase PfkB family. It in the C-terminal section; belongs to the cytidylyltransferase family. In terms of assembly, homodimer.

It carries out the reaction D-glycero-beta-D-manno-heptose 7-phosphate + ATP = D-glycero-beta-D-manno-heptose 1,7-bisphosphate + ADP + H(+). The catalysed reaction is D-glycero-beta-D-manno-heptose 1-phosphate + ATP + H(+) = ADP-D-glycero-beta-D-manno-heptose + diphosphate. The protein operates within nucleotide-sugar biosynthesis; ADP-L-glycero-beta-D-manno-heptose biosynthesis; ADP-L-glycero-beta-D-manno-heptose from D-glycero-beta-D-manno-heptose 7-phosphate: step 1/4. Its pathway is nucleotide-sugar biosynthesis; ADP-L-glycero-beta-D-manno-heptose biosynthesis; ADP-L-glycero-beta-D-manno-heptose from D-glycero-beta-D-manno-heptose 7-phosphate: step 3/4. Functionally, catalyzes the phosphorylation of D-glycero-D-manno-heptose 7-phosphate at the C-1 position to selectively form D-glycero-beta-D-manno-heptose-1,7-bisphosphate. Catalyzes the ADP transfer from ATP to D-glycero-beta-D-manno-heptose 1-phosphate, yielding ADP-D-glycero-beta-D-manno-heptose. The polypeptide is Bifunctional protein HldE (Salmonella dublin (strain CT_02021853)).